We begin with the raw amino-acid sequence, 83 residues long: Cytotoxin homolog 5V (83 aa).

Residues 1–21 (MKTLLLTLVVVTIVCLDLGYT) form the signal peptide. 4 disulfide bridges follow: Cys24–Cys43, Cys36–Cys61, Cys65–Cys76, and Cys77–Cys82.

It belongs to the three-finger toxin family. Short-chain subfamily. Orphan group XV sub-subfamily. Expressed by the venom gland.

The protein resides in the secreted. Its subcellular location is the target cell membrane. Has low cytotoxic activity. This chain is Cytotoxin homolog 5V, found in Naja atra (Chinese cobra).